The following is a 358-amino-acid chain: 3-dehydroquinate synthase (358 aa).

NAD(+)-binding positions include 70–75, 104–108, 128–129, lysine 141, lysine 150, and 168–171; these read DGEQFK, GVIGD, TT, and CLHT. Zn(2+)-binding residues include glutamate 183, histidine 246, and histidine 263.

This sequence belongs to the sugar phosphate cyclases superfamily. Dehydroquinate synthase family. The cofactor is Co(2+). Requires Zn(2+) as cofactor. NAD(+) is required as a cofactor.

Its subcellular location is the cytoplasm. The enzyme catalyses 7-phospho-2-dehydro-3-deoxy-D-arabino-heptonate = 3-dehydroquinate + phosphate. Its pathway is metabolic intermediate biosynthesis; chorismate biosynthesis; chorismate from D-erythrose 4-phosphate and phosphoenolpyruvate: step 2/7. Its function is as follows. Catalyzes the conversion of 3-deoxy-D-arabino-heptulosonate 7-phosphate (DAHP) to dehydroquinate (DHQ). This chain is 3-dehydroquinate synthase, found in Shewanella baltica (strain OS155 / ATCC BAA-1091).